Consider the following 140-residue polypeptide: Nucleoside diphosphate kinase (140 aa).

ATP is bound by residues Lys-11, Phe-59, Arg-87, Thr-93, Arg-104, and Asn-114. The Pros-phosphohistidine intermediate role is filled by His-117.

Belongs to the NDK family. In terms of assembly, homotetramer. It depends on Mg(2+) as a cofactor.

The protein localises to the cytoplasm. It catalyses the reaction a 2'-deoxyribonucleoside 5'-diphosphate + ATP = a 2'-deoxyribonucleoside 5'-triphosphate + ADP. It carries out the reaction a ribonucleoside 5'-diphosphate + ATP = a ribonucleoside 5'-triphosphate + ADP. Its function is as follows. Major role in the synthesis of nucleoside triphosphates other than ATP. The ATP gamma phosphate is transferred to the NDP beta phosphate via a ping-pong mechanism, using a phosphorylated active-site intermediate. The polypeptide is Nucleoside diphosphate kinase (Cereibacter sphaeroides (strain ATCC 17025 / ATH 2.4.3) (Rhodobacter sphaeroides)).